Here is a 420-residue protein sequence, read N- to C-terminus: Histidine--tRNA ligase (420 aa).

This sequence belongs to the class-II aminoacyl-tRNA synthetase family. Homodimer.

The protein resides in the cytoplasm. The catalysed reaction is tRNA(His) + L-histidine + ATP = L-histidyl-tRNA(His) + AMP + diphosphate + H(+). The sequence is that of Histidine--tRNA ligase from Ureaplasma parvum serovar 3 (strain ATCC 27815 / 27 / NCTC 11736).